Consider the following 1393-residue polypeptide: DNA glycosylase/AP lyase ROS1 (1393 aa).

Disordered stretches follow at residues 1 to 25, 98 to 186, and 237 to 265; these read MEKQ…MKPF, SLSS…TSTR, and LSAP…SNLE. The segment covering 98-108 has biased composition (low complexity); sequence SLSSVSNNVAE. The segment covering 117–126 has biased composition (basic residues); that stretch reads PKRKKHRPKV. Basic and acidic residues-rich tracts occupy residues 127–138 and 162–171; these read RREAKPKREPKP and KKVEVSKDQD. A compositionally biased stretch (basic residues) spans 243-256; it reads PKRKRSQGKRKGVQ. Residues 528–626 are DEMETER; it reads KVDLDDETDR…AFMSLASQFP (99 aa). Polar residues predominate over residues 653 to 672; that stretch reads EETMSSPPDHNHSSVTLKNT. Disordered regions lie at residues 653 to 722 and 789 to 830; these read EETM…SVEV and SNQV…CSQQ. The segment covering 687–698 has biased composition (low complexity); it reads SRSSSEIAISAH. The segment covering 699 to 722 has biased composition (basic and acidic residues); that stretch reads ESVDKTTDSKEYVDSDRKGSSVEV. The segment covering 816–830 has biased composition (polar residues); sequence KSSVDSSEPGCCSQQ. Lys-901 participates in a covalent cross-link: Glycyl lysine isopeptide (Lys-Gly) (interchain with G-Cter in ubiquitin). Positions 1038, 1045, 1048, and 1054 each coordinate [4Fe-4S] cluster.

Belongs to the DNA glycosylase family. DEMETER subfamily. As to quaternary structure, interacts (via the central region) with ZDP. Binds to RPA2A. Interacts with XRCC1. Interacts probably with a complex made of MBD7, IDM1, IDM2 and IDM3. Interacts with APE1L. Requires [4Fe-4S] cluster as cofactor. Expressed ubiquitously in both vegetative and reproductive organs.

The protein resides in the nucleus. It is found in the nucleolus. The enzyme catalyses 2'-deoxyribonucleotide-(2'-deoxyribose 5'-phosphate)-2'-deoxyribonucleotide-DNA = a 3'-end 2'-deoxyribonucleotide-(2,3-dehydro-2,3-deoxyribose 5'-phosphate)-DNA + a 5'-end 5'-phospho-2'-deoxyribonucleoside-DNA + H(+). Its activity is regulated as follows. Stimulated by ZDP. Stimulated by XRCC1. In terms of biological role, bifunctional DNA glycosylase/lyase, which excises 5-methylcytosine (5-meC) and 5-hydroxymethylcytosine (5-hmeC), leaving an apyrimidinic (AP) site that is subsequently incised by the lyase activity. Generates 3'-phosphor-alpha,beta-unsaturated aldehyde (3'-PUA) as a primary 5-meC excision intermediate. Prevents DNA hypermethylation, specifically in the promoter of otherwise silenced loci. May be involved in DNA repair through its nicking activity on methylated DNA. Binds with similar affinity to both methylated and non-methylated DNA. Highly distributive behavior on DNA substrates containing multiple 5-meC residues. Involved with Pol IV in the remodeling of the 5S rDNA chromatin via DNA methylation modifications during the first days of development post-germination. Participates in UV-B induced- and oxidative DNA damage repair. In Arabidopsis thaliana (Mouse-ear cress), this protein is DNA glycosylase/AP lyase ROS1.